The primary structure comprises 402 residues: Choline dehydrogenase (402 aa).

It belongs to the iron-containing alcohol dehydrogenase family.

It catalyses the reaction choline + NAD(+) = betaine aldehyde + NADH + H(+). It functions in the pathway amine and polyamine biosynthesis; betaine biosynthesis via choline pathway; betaine aldehyde from choline (dehydrogenase route): step 1/1. Involved in the biosynthesis of the osmoprotectant glycine betaine from choline. In Bacillus subtilis (strain 168), this protein is Choline dehydrogenase.